A 644-amino-acid chain; its full sequence is Exoribonuclease 2 (644 aa).

Positions 189-516 constitute an RNB domain; that stretch reads REDLTSLDFV…NHRLLKAVIK (328 aa). Residues 561–643 enclose the S1 motif domain; that stretch reads GTRFAAEIVD…ETRSIIARPV (83 aa).

Belongs to the RNR ribonuclease family. RNase II subfamily.

It is found in the cytoplasm. The catalysed reaction is Exonucleolytic cleavage in the 3'- to 5'-direction to yield nucleoside 5'-phosphates.. Functionally, involved in mRNA degradation. Hydrolyzes single-stranded polyribonucleotides processively in the 3' to 5' direction. In Shigella flexneri, this protein is Exoribonuclease 2.